The following is a 79-amino-acid chain: UPF0154 protein lwe1321 (79 aa).

The helical transmembrane segment at 2-22 threads the bilayer; sequence WIYILVGIICLLAGLAGGFFI. Residues 57–66 show a composition bias toward polar residues; it reads KINQMMSAMN. Residues 57–79 form a disordered region; it reads KINQMMSAMNKQQEKEKPKKAKK.

This sequence belongs to the UPF0154 family.

It localises to the cell membrane. The polypeptide is UPF0154 protein lwe1321 (Listeria welshimeri serovar 6b (strain ATCC 35897 / DSM 20650 / CCUG 15529 / CIP 8149 / NCTC 11857 / SLCC 5334 / V8)).